We begin with the raw amino-acid sequence, 201 residues long: FMN-dependent NADH:quinone oxidoreductase (201 aa).

FMN is bound by residues S9 and M93–F96.

Belongs to the azoreductase type 1 family. Homodimer. FMN serves as cofactor.

The enzyme catalyses 2 a quinone + NADH + H(+) = 2 a 1,4-benzosemiquinone + NAD(+). The catalysed reaction is N,N-dimethyl-1,4-phenylenediamine + anthranilate + 2 NAD(+) = 2-(4-dimethylaminophenyl)diazenylbenzoate + 2 NADH + 2 H(+). Its function is as follows. Quinone reductase that provides resistance to thiol-specific stress caused by electrophilic quinones. Also exhibits azoreductase activity. Catalyzes the reductive cleavage of the azo bond in aromatic azo compounds to the corresponding amines. This chain is FMN-dependent NADH:quinone oxidoreductase, found in Bradyrhizobium sp. (strain BTAi1 / ATCC BAA-1182).